A 197-amino-acid chain; its full sequence is ATP-dependent Clp protease proteolytic subunit (197 aa).

Catalysis depends on serine 97, which acts as the Nucleophile. Histidine 122 is a catalytic residue.

The protein belongs to the peptidase S14 family. As to quaternary structure, fourteen ClpP subunits assemble into 2 heptameric rings which stack back to back to give a disk-like structure with a central cavity, resembling the structure of eukaryotic proteasomes.

Its subcellular location is the cytoplasm. It carries out the reaction Hydrolysis of proteins to small peptides in the presence of ATP and magnesium. alpha-casein is the usual test substrate. In the absence of ATP, only oligopeptides shorter than five residues are hydrolyzed (such as succinyl-Leu-Tyr-|-NHMec, and Leu-Tyr-Leu-|-Tyr-Trp, in which cleavage of the -Tyr-|-Leu- and -Tyr-|-Trp bonds also occurs).. In terms of biological role, cleaves peptides in various proteins in a process that requires ATP hydrolysis. Has a chymotrypsin-like activity. Plays a major role in the degradation of misfolded proteins. In Trichlorobacter lovleyi (strain ATCC BAA-1151 / DSM 17278 / SZ) (Geobacter lovleyi), this protein is ATP-dependent Clp protease proteolytic subunit.